We begin with the raw amino-acid sequence, 279 residues long: Phenylalanine 3-hydroxylase (279 aa).

Residues H140, H145, and E186 each contribute to the Fe cation site.

This sequence belongs to the biopterin-dependent aromatic amino acid hydroxylase family. Requires Fe(2+) as cofactor.

It catalyses the reaction (6R)-L-erythro-5,6,7,8-tetrahydrobiopterin + L-phenylalanine + O2 = 3-hydroxy-L-phenylalanine + (4aS,6R)-4a-hydroxy-L-erythro-5,6,7,8-tetrahydrobiopterin. Functionally, in vitro, catalyzes the highly regiospecific C-3 hydroxylation of L-phenylalanine (L-Phe) to yield 3-hydroxy-L-phenylalanine (meta-Tyr), an amino acid found in bacterial secondary metabolites such as sanglifehrin A and some pacidamycins. Tetrahydrobiopterin (BH4) seems to be the physiological pterin, however the hydroxylase is also able to use 6-methyltetrahydropterin (6-MePH4). This Streptomyces coeruleorubidus protein is Phenylalanine 3-hydroxylase.